The sequence spans 454 residues: Laccase-3 (454 aa).

Plastocyanin-like domains follow at residues 1 to 95 and 101 to 252; these read PGPT…GPAT and DLGV…YSGA. N24 is a glycosylation site (N-linked (GlcNAc...) asparagine). Residues H29, H31, H73, and H75 each contribute to the Cu cation site. N-linked (GlcNAc...) asparagine glycosylation is found at N138, N169, N218, N314, and N334. The Plastocyanin-like 3 domain maps to 319–454; it reads DVDWKKPILQ…SEGLAVQFQG (136 aa). Cu cation-binding residues include H375, H378, and H380. Residue N395 is glycosylated (N-linked (GlcNAc...) asparagine). Residues H437, C438, H439, and H443 each coordinate Cu cation.

This sequence belongs to the multicopper oxidase family. Cu cation serves as cofactor.

It localises to the secreted. The catalysed reaction is 4 hydroquinone + O2 = 4 benzosemiquinone + 2 H2O. Lignin degradation and detoxification of lignin-derived products. The sequence is that of Laccase-3 (lcc3) from Botryotinia fuckeliana (Noble rot fungus).